A 413-amino-acid polypeptide reads, in one-letter code: High zinc activated nuclear receptor protein (413 aa).

The nuclear receptor DNA-binding region spans 11–86; it reads LGNCKICLQR…EGMKIELVQL (76 aa). 2 NR C4-type zinc fingers span residues 14–34 and 50–69; these read CKICLQRADGIHFAVSSCRAC and CKEKGNCTVEKSLRNLCRSC. Residues 101–412 form a required for zinc-binding region; it reads SIDPLFTPNV…TSQCIVHTKN (312 aa). One can recognise an NR LBD domain in the interval 135–396; that stretch reads QMTSGYAMFL…VCCKNFKEDA (262 aa).

The protein belongs to the nuclear hormone receptor family. Weakly expressed in intestinal cells in the absence of zinc supplementation. Upon zinc supplementation, accumulates in alimentary tract cells, and it is mainly expressed in the intestine.

It is found in the nucleus. It localises to the cytoplasm. Its function is as follows. Nuclear receptor transcription factor that binds to DNA enhancer elements to promote the transcription of genes required to maintain micronutrient homeostasis. Direct binding to its ligand zinc allows for nuclear accumulation and activation, which thereby induces the transcription of genes required to promote the storage and detoxification of excess dietary zinc. This in turn, allows for internal zinc levels to be detected and regulated. This Caenorhabditis elegans protein is High zinc activated nuclear receptor protein.